Here is a 964-residue protein sequence, read N- to C-terminus: Translation initiation factor IF-2 (964 aa).

Residues 105–119 (AALAESEASEAAPVV) are compositionally biased toward low complexity. 2 disordered regions span residues 105–133 (AALA…EHRR) and 146–378 (KARQ…PTEP). 4 stretches are compositionally biased toward basic and acidic residues: residues 123 to 133 (EVARREEEHRR), 146 to 183 (KARQ…KAEE), 197 to 253 (EAPR…RAIR), and 266 to 278 (PAER…KKAE). Low complexity predominate over residues 288–302 (KPAGEARPAAAKKPA). Over residues 303–313 (APAPAAAPAPG) the composition is skewed to pro residues. In terms of domain architecture, tr-type G spans 464–633 (TRPPVVTVMG…LLQAEVLELK (170 aa)). The segment at 473-480 (GHVDHGKT) is G1. Residue 473–480 (GHVDHGKT) coordinates GTP. The tract at residues 498-502 (GITQH) is G2. A G3 region spans residues 519–522 (DTPG). GTP contacts are provided by residues 519–523 (DTPGH) and 573–576 (TKVD). The G4 stretch occupies residues 573–576 (TKVD). Residues 609–611 (SAK) form a G5 region.

Belongs to the TRAFAC class translation factor GTPase superfamily. Classic translation factor GTPase family. IF-2 subfamily.

The protein resides in the cytoplasm. Functionally, one of the essential components for the initiation of protein synthesis. Protects formylmethionyl-tRNA from spontaneous hydrolysis and promotes its binding to the 30S ribosomal subunits. Also involved in the hydrolysis of GTP during the formation of the 70S ribosomal complex. This chain is Translation initiation factor IF-2, found in Ralstonia pickettii (strain 12J).